The sequence spans 89 residues: Small ribosomal subunit protein uS15 (89 aa).

It belongs to the universal ribosomal protein uS15 family. In terms of assembly, part of the 30S ribosomal subunit. Forms a bridge to the 50S subunit in the 70S ribosome, contacting the 23S rRNA.

Functionally, one of the primary rRNA binding proteins, it binds directly to 16S rRNA where it helps nucleate assembly of the platform of the 30S subunit by binding and bridging several RNA helices of the 16S rRNA. Its function is as follows. Forms an intersubunit bridge (bridge B4) with the 23S rRNA of the 50S subunit in the ribosome. This chain is Small ribosomal subunit protein uS15, found in Acaryochloris marina (strain MBIC 11017).